The following is a 156-amino-acid chain: Ribosomal RNA large subunit methyltransferase H (156 aa).

S-adenosyl-L-methionine-binding positions include L73, G104, and 123–128; that span reads LSKLTL.

It belongs to the RNA methyltransferase RlmH family. In terms of assembly, homodimer.

The protein resides in the cytoplasm. The enzyme catalyses pseudouridine(1915) in 23S rRNA + S-adenosyl-L-methionine = N(3)-methylpseudouridine(1915) in 23S rRNA + S-adenosyl-L-homocysteine + H(+). In terms of biological role, specifically methylates the pseudouridine at position 1915 (m3Psi1915) in 23S rRNA. This is Ribosomal RNA large subunit methyltransferase H from Hydrogenovibrio crunogenus (strain DSM 25203 / XCL-2) (Thiomicrospira crunogena).